The primary structure comprises 976 residues: Probable basic-leucine zipper transcription factor Q (976 aa).

Coiled-coil stretches lie at residues 57-110 (AIDS…QYQQ) and 136-287 (QQQQ…QQQQ). Residues 104 to 128 (YQQQYQQPYTTPSPPDQIDYNQQLS) form a disordered region. Composition is skewed to polar residues over residues 374–385 (TNFNGTNNSTPN) and 393–411 (KLSSNNIKNTATPLSSPPS). A disordered region spans residues 374–499 (TNFNGTNNST…PIDSNGDFDL (126 aa)). 2 stretches are compositionally biased toward low complexity: residues 420-468 (PKNN…FNNN) and 476-490 (STTTPTITSPNMTSP). The bZIP domain maps to 504–567 (EKKKSISRIN…GVEVMRPEPE (64 aa)). Residues 505–507 (KKK) are basic motif. The tract at residues 509-516 (ISRINQNL) is leucine-zipper. A compositionally biased stretch (low complexity) spans 855–938 (ENQSNNFGNN…VNSNNNNFNN (84 aa)). Positions 855–957 (ENQSNNFGNN…SADAIPYPST (103 aa)) are disordered.

This sequence belongs to the bZIP family.

It is found in the nucleus. Its function is as follows. Probable transcriptional regulator. The protein is Probable basic-leucine zipper transcription factor Q (bzpQ) of Dictyostelium discoideum (Social amoeba).